A 306-amino-acid chain; its full sequence is Dihydroorotate dehydrogenase B (NAD(+)), catalytic subunit (306 aa).

FMN contacts are provided by residues Ser-24 and 48–49 (KA). Residues Lys-48 and 72 to 76 (NAIGL) contribute to the substrate site. Positions 102 and 130 each coordinate FMN. Residue Asn-130 coordinates substrate. Catalysis depends on Cys-133, which acts as the Nucleophile. The FMN site is built by Lys-168 and Ile-194. 195-196 (NT) serves as a coordination point for substrate. FMN contacts are provided by residues Gly-220, 246-247 (GG), and 268-269 (GT).

It belongs to the dihydroorotate dehydrogenase family. Type 1 subfamily. In terms of assembly, heterotetramer of 2 PyrK and 2 PyrD type B subunits. It depends on FMN as a cofactor.

Its subcellular location is the cytoplasm. The enzyme catalyses (S)-dihydroorotate + NAD(+) = orotate + NADH + H(+). The protein operates within pyrimidine metabolism; UMP biosynthesis via de novo pathway; orotate from (S)-dihydroorotate (NAD(+) route): step 1/1. Its function is as follows. Catalyzes the conversion of dihydroorotate to orotate with NAD(+) as electron acceptor. The polypeptide is Dihydroorotate dehydrogenase B (NAD(+)), catalytic subunit (pyrD) (Malacoplasma penetrans (strain HF-2) (Mycoplasma penetrans)).